Consider the following 215-residue polypeptide: UPF0502 protein YceH (215 aa).

At lysine 80 the chain carries N6-acetyllysine.

The protein belongs to the UPF0502 family.

This is UPF0502 protein YceH from Shigella boydii serotype 18 (strain CDC 3083-94 / BS512).